The chain runs to 189 residues: Glucose-6-phosphate isomerase (189 aa).

Positions 88, 90, 97, and 136 each coordinate Fe cation.

It belongs to the archaeal-type GPI family. In terms of assembly, homodimer. Fe cation is required as a cofactor.

It localises to the cytoplasm. The enzyme catalyses alpha-D-glucose 6-phosphate = beta-D-fructose 6-phosphate. It functions in the pathway carbohydrate degradation; glycolysis; D-glyceraldehyde 3-phosphate and glycerone phosphate from D-glucose: step 2/4. With respect to regulation, inhibited by mannose 6-phosphate, fructose 1-phosphate and fructose 1,6-bisphosphate. This Pyrococcus furiosus (strain ATCC 43587 / DSM 3638 / JCM 8422 / Vc1) protein is Glucose-6-phosphate isomerase (pgiA).